A 171-amino-acid chain; its full sequence is 3-hydroxydecanoyl-[acyl-carrier-protein] dehydratase (171 aa).

His70 is a catalytic residue.

It belongs to the thioester dehydratase family. FabA subfamily. In terms of assembly, homodimer.

It is found in the cytoplasm. It carries out the reaction a (3R)-hydroxyacyl-[ACP] = a (2E)-enoyl-[ACP] + H2O. The enzyme catalyses (3R)-hydroxydecanoyl-[ACP] = (2E)-decenoyl-[ACP] + H2O. The catalysed reaction is (2E)-decenoyl-[ACP] = (3Z)-decenoyl-[ACP]. It functions in the pathway lipid metabolism; fatty acid biosynthesis. Necessary for the introduction of cis unsaturation into fatty acids. Catalyzes the dehydration of (3R)-3-hydroxydecanoyl-ACP to E-(2)-decenoyl-ACP and then its isomerization to Z-(3)-decenoyl-ACP. Can catalyze the dehydratase reaction for beta-hydroxyacyl-ACPs with saturated chain lengths up to 16:0, being most active on intermediate chain length. In Marinomonas sp. (strain MWYL1), this protein is 3-hydroxydecanoyl-[acyl-carrier-protein] dehydratase.